The chain runs to 179 residues: ATP-dependent protease subunit HslV (179 aa).

The active site involves Thr-9. Residues Ala-164, Cys-167, and Thr-170 each coordinate Na(+).

It belongs to the peptidase T1B family. HslV subfamily. As to quaternary structure, a double ring-shaped homohexamer of HslV is capped on each side by a ring-shaped HslU homohexamer. The assembly of the HslU/HslV complex is dependent on binding of ATP.

The protein resides in the cytoplasm. The catalysed reaction is ATP-dependent cleavage of peptide bonds with broad specificity.. Allosterically activated by HslU binding. Protease subunit of a proteasome-like degradation complex believed to be a general protein degrading machinery. The polypeptide is ATP-dependent protease subunit HslV (Syntrophobacter fumaroxidans (strain DSM 10017 / MPOB)).